Here is a 175-residue protein sequence, read N- to C-terminus: Bcl-2-related protein A1 (175 aa).

Positions 77-97 (KEFEDGIINWGRIVTIFAFEG) match the BH1 motif. Residues 132–147 (EWIRQNGGWENGFVKK) carry the BH2 motif.

This sequence belongs to the Bcl-2 family. As to quaternary structure, interacts directly with BAK1, BID, BMF and BBC3. Interacts directly with BCL2L11/BIM. Interacts with BAX isoform Sigma. Interacts directly with PMAIP1. Interacts with RTL10/BOP. Interacts with ING4. Interacts with UBQLN4. Seems to be restricted to the hematopoietic compartment. Expressed in peripheral blood, spleen, and bone marrow, at moderate levels in lung, small intestine and testis, at a minimal levels in other tissues. Also found in vascular smooth muscle cells and hematopoietic malignancies.

It localises to the cytoplasm. Functionally, retards apoptosis induced by IL-3 deprivation. May function in the response of hemopoietic cells to external signals and in maintaining endothelial survival during infection. Can inhibit apoptosis induced by serum starvation in the mammary epithelial cell line HC11. This chain is Bcl-2-related protein A1 (BCL2A1), found in Homo sapiens (Human).